Reading from the N-terminus, the 440-residue chain is Thymidine phosphorylase (440 aa).

This sequence belongs to the thymidine/pyrimidine-nucleoside phosphorylase family. Homodimer.

The enzyme catalyses thymidine + phosphate = 2-deoxy-alpha-D-ribose 1-phosphate + thymine. Its pathway is pyrimidine metabolism; dTMP biosynthesis via salvage pathway; dTMP from thymine: step 1/2. In terms of biological role, the enzymes which catalyze the reversible phosphorolysis of pyrimidine nucleosides are involved in the degradation of these compounds and in their utilization as carbon and energy sources, or in the rescue of pyrimidine bases for nucleotide synthesis. The chain is Thymidine phosphorylase from Shigella boydii serotype 4 (strain Sb227).